The chain runs to 605 residues: MGQVLSDESSRHLSHEELTHELASRFADKCFTSLEIYSFKDVFKSLADNQGGIRYLKEDTLARFLEIPDILHVSPVVFQMVSYIGAFPFLQNAPAVLGLDQMVMVVVIMTQRHKRVLAKGATDRAKLLFKSLAVHDRTASEAAVAAEKSSKEEQATQSQPRSHVAGFAVDEPVEEPEDDDDDLEIAAFELLDINDAVWQGDAPKVQGAMIPADNFRKLLMLLILIAPLNAQERLSMYSTRVTGDELDSLRATAEHILAAFLNVEKAPGIKFSQYNRVLPVCFPNLFSGFSPLFEHFLFSKNLDFTKHKGEEPVAEKQPEEIVQPLLPEPGEILNLNVLSQLSFFLPGSDLFRRLRPLYSGNKDGFSTGSFEGKVFNWRAPTILLVRGTRIDDDPRGSQQSTFAASIPPRRFPSGSKGERLTFGVYVSTPWKHTAKETFGEGDTVLFQLEPVHDVFPASRYNSEFISFTKAPTNRPMLGVGCPHPRPSQAHRRNEMLSLGSVSLLLDDSFEYGVFNHDWTAGGGAFATSVSRKFDFQDRFEIESLEVWGCGGDEEAKSQADRWAWEHREAEARRKVNLGTGDNDADRALLEMAGLVGSGRSGGSMA.

Residues 145–164 (AAEKSSKEEQATQSQPRSHV) form a disordered region. The TLDc domain maps to 331-550 (EILNLNVLSQ…IESLEVWGCG (220 aa)).

Belongs to the RTC5 family.

The protein resides in the cytoplasm. In terms of biological role, may be involved in a process influencing telomere capping. This chain is Restriction of telomere capping protein 5 (RTC5), found in Colletotrichum graminicola (strain M1.001 / M2 / FGSC 10212) (Maize anthracnose fungus).